Consider the following 393-residue polypeptide: Phosphatidate cytidylyltransferase (393 aa).

Helical transmembrane passes span 49 to 69 (NFFRRLVLSIVMISGFCWISV), 73 to 93 (IYSFGLIIFLTISIIREIIGI), 108 to 128 (IILGLAVPIYSYLVFPSIMMM), 141 to 161 (LSFVCFYSYVAAFMCFVASLR), 171 to 191 (LFALIHLSTYTMAIAAKCAIF), 198 to 218 (FWFVFPALLVISNDISAYVVG), 237 to 257 (GFIGAFIFTTAVGFALGHLHV), and 290 to 310 (IHIIPFIFVASFVAPFSGFLA).

This sequence belongs to the CDS family.

The protein localises to the membrane. The catalysed reaction is a 1,2-diacyl-sn-glycero-3-phosphate + CTP + H(+) = a CDP-1,2-diacyl-sn-glycerol + diphosphate. It participates in phospholipid metabolism; CDP-diacylglycerol biosynthesis; CDP-diacylglycerol from sn-glycerol 3-phosphate: step 3/3. The polypeptide is Phosphatidate cytidylyltransferase (CDS1) (Encephalitozoon cuniculi (strain GB-M1) (Microsporidian parasite)).